Here is a 99-residue protein sequence, read N- to C-terminus: DNA-directed RNA polymerase subunit omega (99 aa).

The protein belongs to the RNA polymerase subunit omega family. In terms of assembly, the RNAP catalytic core consists of 2 alpha, 1 beta, 1 beta' and 1 omega subunit. When a sigma factor is associated with the core the holoenzyme is formed, which can initiate transcription.

It catalyses the reaction RNA(n) + a ribonucleoside 5'-triphosphate = RNA(n+1) + diphosphate. Its function is as follows. Promotes RNA polymerase assembly. Latches the N- and C-terminal regions of the beta' subunit thereby facilitating its interaction with the beta and alpha subunits. This is DNA-directed RNA polymerase subunit omega (rpoZ) from Deinococcus radiodurans (strain ATCC 13939 / DSM 20539 / JCM 16871 / CCUG 27074 / LMG 4051 / NBRC 15346 / NCIMB 9279 / VKM B-1422 / R1).